A 487-amino-acid polypeptide reads, in one-letter code: N-succinylglutamate 5-semialdehyde dehydrogenase (487 aa).

221–226 (GSSRTG) provides a ligand contact to NAD(+). Catalysis depends on residues Glu244 and Cys278.

This sequence belongs to the aldehyde dehydrogenase family. AstD subfamily.

It carries out the reaction N-succinyl-L-glutamate 5-semialdehyde + NAD(+) + H2O = N-succinyl-L-glutamate + NADH + 2 H(+). The protein operates within amino-acid degradation; L-arginine degradation via AST pathway; L-glutamate and succinate from L-arginine: step 4/5. Its function is as follows. Catalyzes the NAD-dependent reduction of succinylglutamate semialdehyde into succinylglutamate. The protein is N-succinylglutamate 5-semialdehyde dehydrogenase of Ectopseudomonas mendocina (strain ymp) (Pseudomonas mendocina).